The sequence spans 269 residues: SF-assemblin (269 aa).

Residues 1-23 (MSISPGRSFSPMRASGLTGITSA) form a disordered region. The segment at 1 to 24 (MSISPGRSFSPMRASGLTGITSAG) is nonhelical region. Residues 25-269 (PTAKLEHVSE…LQEGLKLVST (245 aa)) form a rod region. Residues 98–144 (AERSAAQHVDMQNSLKQAVDSLSNRLQDLHSLVREEREQRRNDIEHL) adopt a coiled-coil conformation.

Belongs to the SF-assemblin family.

The protein localises to the cytoplasm. Its subcellular location is the cytoskeleton. Functionally, major component of the striated microtubule-associated fibers (SMAFs; system-I-fibers). This Chlamydomonas moewusii (Chlamydomonas eugametos) protein is SF-assemblin.